The following is a 471-amino-acid chain: V-type ATP synthase beta chain (471 aa).

The protein belongs to the ATPase alpha/beta chains family.

Its function is as follows. Produces ATP from ADP in the presence of a proton gradient across the membrane. The V-type beta chain is a regulatory subunit. This chain is V-type ATP synthase beta chain, found in Streptococcus pyogenes serotype M12 (strain MGAS2096).